A 199-amino-acid polypeptide reads, in one-letter code: Replication protein (199 aa).

It belongs to the Gram-positive plasmids replication protein type 2 family.

In terms of biological role, is essential for plasmid replication. Nicks the positive strand at the plus origin of replication. The sequence is that of Replication protein (repF) from Staphylococcus aureus.